The primary structure comprises 59 residues: Large ribosomal subunit protein uL30 (59 aa).

It belongs to the universal ribosomal protein uL30 family. Part of the 50S ribosomal subunit.

The polypeptide is Large ribosomal subunit protein uL30 (Enterobacter sp. (strain 638)).